The chain runs to 159 residues: uncharacterized protein (159 aa).

The N-acetyltransferase domain occupies 4 to 153 (IKTDDLTHPA…HSRFLSLTLC (150 aa)).

The protein belongs to the acetyltransferase family.

This is an uncharacterized protein from Escherichia coli (strain K12).